The chain runs to 516 residues: AMP phosphorylase (516 aa).

Residues Gly169, 195-200 (SRAITG), and Thr204 each bind AMP. The Proton donor role is filled by Asp257. Residues Ser265 and Lys289 each coordinate AMP.

The protein belongs to the thymidine/pyrimidine-nucleoside phosphorylase family. Type 2 subfamily.

The catalysed reaction is AMP + phosphate = alpha-D-ribose 1,5-bisphosphate + adenine. The enzyme catalyses CMP + phosphate = cytosine + alpha-D-ribose 1,5-bisphosphate. It carries out the reaction UMP + phosphate = alpha-D-ribose 1,5-bisphosphate + uracil. Its function is as follows. Catalyzes the conversion of AMP and phosphate to adenine and ribose 1,5-bisphosphate (R15P). Exhibits phosphorylase activity toward CMP and UMP in addition to AMP. Functions in an archaeal AMP degradation pathway, together with R15P isomerase and RubisCO. This chain is AMP phosphorylase, found in Methanospirillum hungatei JF-1 (strain ATCC 27890 / DSM 864 / NBRC 100397 / JF-1).